The sequence spans 367 residues: MNPDVAADLKELSTTLEGIESVMDLDALRAKIAELEEEAARPDLWDDVEHAQRVSSQLVHRQSELRKIKDLRQRVEDLEVLYELSEDEGDDSGLAEADSERTKLKKDLEALEVRTLLSGDYDQREAVVTIRAEAGGVDAADFAEMLMRMYVRWAERHEYPVEVYDTSYAEEAGLKSATFRVNAPYAYGTLSVEQGTHRLVRISPFDNQGRRQTSFAGVEVLPVVEETDHVEIPEKDIRVDVFRSSGPGGQSVNTTDSAVRITHIPTGIVVSCQNEKSQLQNKAAALRVLQSKLLAKKKEQERAELDALKDSGSSWGNQMRSYVLHPYQMVKDLRTEFEVGNPDAVLDGQIDGFLEAGIRWRRQQDAA.

Q250 is subject to N5-methylglutamine.

It belongs to the prokaryotic/mitochondrial release factor family. Methylated by PrmC. Methylation increases the termination efficiency of RF2.

The protein resides in the cytoplasm. Its function is as follows. Peptide chain release factor 2 directs the termination of translation in response to the peptide chain termination codons UGA and UAA. This chain is Peptide chain release factor 2, found in Saccharopolyspora erythraea (strain ATCC 11635 / DSM 40517 / JCM 4748 / NBRC 13426 / NCIMB 8594 / NRRL 2338).